The chain runs to 230 residues: Pyridoxal phosphate homeostasis protein (230 aa).

N6-(pyridoxal phosphate)lysine is present on lysine 36.

It belongs to the pyridoxal phosphate-binding protein YggS/PROSC family.

Functionally, perhaps involved in proline biosynthesis. Its function is as follows. Pyridoxal 5'-phosphate (PLP)-binding protein, which is involved in PLP homeostasis. In Pseudomonas aeruginosa (strain ATCC 15692 / DSM 22644 / CIP 104116 / JCM 14847 / LMG 12228 / 1C / PRS 101 / PAO1), this protein is Pyridoxal phosphate homeostasis protein.